A 261-amino-acid chain; its full sequence is Bcl-2-binding component 3, isoforms 3/4 (261 aa).

The interval 27–261 (QICGPRERHG…ASAGDFLCTM (235 aa)) is disordered. Residues 40-50 (PGGQLPGARRG) show a composition bias toward low complexity. Residues 53–63 (PRRPAPLPARP) are compositionally biased toward pro residues. Over residues 64-73 (PGALGSVLRP) the composition is skewed to low complexity. Basic residues-rich tracts occupy residues 74–87 (LRARPGCRPRRPHP) and 95–106 (RPHRPTRRHRRP). Over residues 124-146 (PGRSSALALAGGAAPGVARAQRP) the composition is skewed to low complexity. Residues 147 to 171 (GGSGGRSHPGGPGSPRGGGTVGPGD) are compositionally biased toward gly residues. Residues 172–197 (RGPAAADGGRPQRTVRAAETRGAAAA) show a composition bias toward low complexity.

In terms of assembly, does not interact with BCL2.

Functionally, does not affect cell growth. In Homo sapiens (Human), this protein is Bcl-2-binding component 3, isoforms 3/4 (BBC3).